Reading from the N-terminus, the 192-residue chain is Peptidyl-tRNA hydrolase (192 aa).

Tyr-14 contacts tRNA. The active-site Proton acceptor is His-19. TRNA contacts are provided by Tyr-64, Asn-66, and Asn-112.

It belongs to the PTH family. As to quaternary structure, monomer.

It localises to the cytoplasm. The catalysed reaction is an N-acyl-L-alpha-aminoacyl-tRNA + H2O = an N-acyl-L-amino acid + a tRNA + H(+). Hydrolyzes ribosome-free peptidyl-tRNAs (with 1 or more amino acids incorporated), which drop off the ribosome during protein synthesis, or as a result of ribosome stalling. In terms of biological role, catalyzes the release of premature peptidyl moieties from peptidyl-tRNA molecules trapped in stalled 50S ribosomal subunits, and thus maintains levels of free tRNAs and 50S ribosomes. The polypeptide is Peptidyl-tRNA hydrolase (Anaeromyxobacter dehalogenans (strain 2CP-1 / ATCC BAA-258)).